The following is a 325-amino-acid chain: Anthranilate phosphoribosyltransferase (325 aa).

Residues glycine 73, 76–77 (GD), threonine 81, 83–86 (NIST), 100–108 (KHGNVSITS), and serine 112 each bind 5-phospho-alpha-D-ribose 1-diphosphate. Residue glycine 73 participates in anthranilate binding. Residue serine 85 coordinates Mg(2+). Asparagine 103 serves as a coordination point for anthranilate. Arginine 158 contributes to the anthranilate binding site. Residues aspartate 216 and glutamate 217 each coordinate Mg(2+).

The protein belongs to the anthranilate phosphoribosyltransferase family. Homodimer. Requires Mg(2+) as cofactor.

It catalyses the reaction N-(5-phospho-beta-D-ribosyl)anthranilate + diphosphate = 5-phospho-alpha-D-ribose 1-diphosphate + anthranilate. It participates in amino-acid biosynthesis; L-tryptophan biosynthesis; L-tryptophan from chorismate: step 2/5. Catalyzes the transfer of the phosphoribosyl group of 5-phosphorylribose-1-pyrophosphate (PRPP) to anthranilate to yield N-(5'-phosphoribosyl)-anthranilate (PRA). This Methanococcus aeolicus (strain ATCC BAA-1280 / DSM 17508 / OCM 812 / Nankai-3) protein is Anthranilate phosphoribosyltransferase.